Consider the following 137-residue polypeptide: Large ribosomal subunit protein uL16 (137 aa).

Positions 1–17 (MLQPKRTKFRKQQKGRN) are enriched in basic residues. A disordered region spans residues 1–24 (MLQPKRTKFRKQQKGRNRGLAQSG).

It belongs to the universal ribosomal protein uL16 family. Part of the 50S ribosomal subunit.

In terms of biological role, binds 23S rRNA and is also seen to make contacts with the A and possibly P site tRNAs. The sequence is that of Large ribosomal subunit protein uL16 from Dichelobacter nodosus (strain VCS1703A).